Here is a 305-residue protein sequence, read N- to C-terminus: Suppressor of activated egl-4 protein 2 (305 aa).

Residues 138-168 (KRGYESDSSDVSGVSHCSDAKRRRGRPRKDE) form a disordered region. The a.T hook DNA-binding region spans 158-170 (KRRRGRPRKDEEA).

Interacts with phosphorylated egl-4. May interact with itself. May be a component of a histone deacetylase complex containing saeg-2, saeg-1 and hda-2. Ubiquitously expressed.

It is found in the nucleus. Functionally, as a likely component of a histone deacetylase complex, together with saeg-1 and hda-2, functions downstream of the cAMP-dependent kinase egl-4 to regulate the expression of genes required for egg-laying and foraging. This is Suppressor of activated egl-4 protein 2 from Caenorhabditis elegans.